Consider the following 243-residue polypeptide: Protein-L-isoaspartate O-methyltransferase (243 aa).

The active site involves Ser-87.

It belongs to the methyltransferase superfamily. L-isoaspartyl/D-aspartyl protein methyltransferase family.

It localises to the cytoplasm. The enzyme catalyses [protein]-L-isoaspartate + S-adenosyl-L-methionine = [protein]-L-isoaspartate alpha-methyl ester + S-adenosyl-L-homocysteine. Its function is as follows. Catalyzes the methyl esterification of L-isoaspartyl residues in peptides and proteins that result from spontaneous decomposition of normal L-aspartyl and L-asparaginyl residues. It plays a role in the repair and/or degradation of damaged proteins. The polypeptide is Protein-L-isoaspartate O-methyltransferase (Methanosarcina mazei (strain ATCC BAA-159 / DSM 3647 / Goe1 / Go1 / JCM 11833 / OCM 88) (Methanosarcina frisia)).